The chain runs to 179 residues: uncharacterized protein (179 aa).

A signal peptide spans 1-27; the sequence is MNKSMIQSGGYVLLAGLILAMSSTLFA. The cysteines at positions 43 and 83 are disulfide-linked.

It belongs to the fimbrial protein family.

The protein localises to the fimbrium. Part of the yfcOPQRSUV fimbrial operon. Could contribute to adhesion to various surfaces in specific environmental niches. Increases adhesion to eukaryotic T24 bladder epithelial cells in the absence of fim genes. This is an uncharacterized protein from Escherichia coli (strain K12).